The primary structure comprises 105 residues: Cell division protein FtsB (105 aa).

The Cytoplasmic segment spans residues 1–3; it reads MRL. A helical transmembrane segment spans residues 4-21; the sequence is FTLILMVVLALVQRQLWF. At 22–105 the chain is on the periplasmic side; sequence GKNGLVEYRQ…NKQSSLPKSD (84 aa). The stretch at 28–74 forms a coiled coil; sequence EYRQVSENLLRRQADNQKLQERNMLLKEDIEDLKSGLEAIEELARND.

It belongs to the FtsB family. In terms of assembly, part of a complex composed of FtsB, FtsL and FtsQ.

It is found in the cell inner membrane. Functionally, essential cell division protein. May link together the upstream cell division proteins, which are predominantly cytoplasmic, with the downstream cell division proteins, which are predominantly periplasmic. The protein is Cell division protein FtsB of Tolumonas auensis (strain DSM 9187 / NBRC 110442 / TA 4).